The chain runs to 105 residues: Large ribosomal subunit protein uL24 (105 aa).

The protein belongs to the universal ribosomal protein uL24 family. As to quaternary structure, part of the 50S ribosomal subunit.

One of two assembly initiator proteins, it binds directly to the 5'-end of the 23S rRNA, where it nucleates assembly of the 50S subunit. In terms of biological role, one of the proteins that surrounds the polypeptide exit tunnel on the outside of the subunit. This Francisella philomiragia subsp. philomiragia (strain ATCC 25017 / CCUG 19701 / FSC 153 / O#319-036) protein is Large ribosomal subunit protein uL24.